Consider the following 892-residue polypeptide: Alanine--tRNA ligase (892 aa).

Residues His-596, His-600, Cys-700, and His-704 each coordinate Zn(2+).

Belongs to the class-II aminoacyl-tRNA synthetase family. Zn(2+) is required as a cofactor.

Its subcellular location is the cytoplasm. The enzyme catalyses tRNA(Ala) + L-alanine + ATP = L-alanyl-tRNA(Ala) + AMP + diphosphate. Its function is as follows. Catalyzes the attachment of alanine to tRNA(Ala) in a two-step reaction: alanine is first activated by ATP to form Ala-AMP and then transferred to the acceptor end of tRNA(Ala). Also edits incorrectly charged Ser-tRNA(Ala) and Gly-tRNA(Ala) via its editing domain. The polypeptide is Alanine--tRNA ligase (Methanococcus maripaludis (strain DSM 14266 / JCM 13030 / NBRC 101832 / S2 / LL)).